The chain runs to 1044 residues: Elongation factor 3 (1044 aa).

Residues 5-42 (AQSIKVLGELFEKLSVATAENREATATEIASFLNGNII) form an HEAT 1 repeat. ADP contacts are provided by Ile42 and His44. One copy of the HEAT 2 repeat lies at 45–80 (DVPEEFFKNLTKAVKDKKTAAAALETIAHIANENNL). Ser83 contacts ADP. 6 HEAT repeats span residues 86–123 (PYIV…AIDP), 124–162 (VAIK…AAKT), 166–203 (LRMP…TVDN), 205–241 (DIER…EVTP), 242–279 (ATLS…LVED), and 285–323 (PFLE…VGNV). The ADP site is built by Thr392, His396, and Glu397. ABC transporter domains lie at 426-641 (DEGE…YYEL) and 667-993 (VKVS…KKED). ADP contacts are provided by Asn703, Glu922, Asn925, and His951. A disordered region spans residues 975-1044 (GHNWVSGQGS…DAYVSSDDEF (70 aa)). The span at 987 to 999 (RLEKKEDEGDKFD) shows a compositional bias: basic and acidic residues. Over residues 1009 to 1031 (NKKKKLSSAELRKKKKERMKKKK) the composition is skewed to basic residues.

This sequence belongs to the ABC transporter superfamily. ABCF family. EF3 subfamily. As to quaternary structure, monomer.

Its subcellular location is the cytoplasm. It carries out the reaction ATP + H2O = ADP + phosphate + H(+). Its pathway is protein biosynthesis; polypeptide chain elongation. Its function is as follows. Ribosome-dependent ATPase that functions in cytoplasmic translation elongation. Required for the ATP-dependent release of deacylated tRNA from the ribosomal E-site during protein biosynthesis. Stimulates the eEF1A-dependent binding of aminoacyl-tRNA to the ribosomal A-site, which has reduced affinity for tRNA as long as the E-site is occupied. Assists translation termination by stimulating the release of nascent protein from the ribosome by release factors. This is Elongation factor 3 (TEF3) from Eremothecium gossypii (strain ATCC 10895 / CBS 109.51 / FGSC 9923 / NRRL Y-1056) (Yeast).